The following is a 293-amino-acid chain: MDSQLANPPNAFNYIESQRDEYQLSHDLTEIILQFPSTASQLSARFSRSCMKIDHCVIEYRQQVPINATGSVVVEIHDKRMTDNESLQASWTFPIRCNIDLHYFSSSFFSLKDPIPWKLYYRVSDTNVHQRTHFAKFKGKLKLSTAKHSVDIPFRAPTVKILSKQFSNKDIDFSHVDYGKWERKLIRSASLSKYGLQGPIELKPGESWASKSTIGVSHLDADSDLDSAIHPYKNLNRLGSSVLDPGDSASIIGAQRAQSNITLSIAQLNEIVRSTVNECINNNCIHVQPKSLK.

It belongs to the begomovirus movement protein BC1 family. In terms of assembly, binds to dimeric supercoiled plasmid DNA. Phosphorylated.

Its subcellular location is the host cell membrane. The protein resides in the host microsome membrane. It is found in the host endoplasmic reticulum membrane. Functionally, transports viral genome to neighboring plant cells directly through plasmosdesmata, without any budding. The movement protein allows efficient cell to cell propagation, by bypassing the host cell wall barrier. Begomovirus genome is shuttled out of nucleus by Nuclear shuttle protein (NSP) and the movement protein transports the DNA-NSP complex to cell plasmodesmata and facilitates further movement across the cell wall. This is Movement protein BC1 from Macroptilium lathyroides (Lima bean).